The chain runs to 107 residues: UPF0060 membrane protein glr4174 (107 aa).

4 consecutive transmembrane segments (helical) span residues Met1–Trp21, Leu26–Leu46, Ala58–Glu78, and Leu87–Pro107.

Belongs to the UPF0060 family.

It is found in the cell inner membrane. This is UPF0060 membrane protein glr4174 from Gloeobacter violaceus (strain ATCC 29082 / PCC 7421).